Consider the following 108-residue polypeptide: Phosphocarrier protein HPr (108 aa).

Residues Glu21–Leu108 enclose the HPr domain. The active-site Pros-phosphohistidine intermediate is His35.

It belongs to the HPr family.

The protein resides in the cytoplasm. In terms of biological role, general (non sugar-specific) component of the phosphoenolpyruvate-dependent sugar phosphotransferase system (sugar PTS). This major carbohydrate active-transport system catalyzes the phosphorylation of incoming sugar substrates concomitantly with their translocation across the cell membrane. The phosphoryl group from phosphoenolpyruvate (PEP) is transferred to the phosphoryl carrier protein HPr by enzyme I. Phospho-HPr then transfers it to the PTS EIIA domain. This Chlamydia pneumoniae (Chlamydophila pneumoniae) protein is Phosphocarrier protein HPr (ptsH).